The sequence spans 67 residues: Large ribosomal subunit protein uL29 (67 aa).

It belongs to the universal ribosomal protein uL29 family.

This Gemmatimonas aurantiaca (strain DSM 14586 / JCM 11422 / NBRC 100505 / T-27) protein is Large ribosomal subunit protein uL29.